Consider the following 154-residue polypeptide: Probable transport accessory protein MmpS4 (154 aa).

2 helical membrane-spanning segments follow: residues 19-39 (IWIP…VYRV) and 97-117 (QLPW…NLVA).

Belongs to the MmpS family.

The protein resides in the cell membrane. The polypeptide is Probable transport accessory protein MmpS4 (Mycobacterium leprae (strain TN)).